A 282-amino-acid polypeptide reads, in one-letter code: Shikimate dehydrogenase (NADP(+)) (282 aa).

Shikimate contacts are provided by residues 24–26 and Thr71; that span reads SRS. Catalysis depends on Lys75, which acts as the Proton acceptor. Asp87 contacts NADP(+). Shikimate is bound by residues Asn96 and Asp112. NADP(+)-binding positions include 138-142, 162-167, and Leu227; these read GAGGA and NRTRIR. Tyr229 provides a ligand contact to shikimate. Residue Gly250 coordinates NADP(+).

The protein belongs to the shikimate dehydrogenase family. Homodimer.

It carries out the reaction shikimate + NADP(+) = 3-dehydroshikimate + NADPH + H(+). It functions in the pathway metabolic intermediate biosynthesis; chorismate biosynthesis; chorismate from D-erythrose 4-phosphate and phosphoenolpyruvate: step 4/7. In terms of biological role, involved in the biosynthesis of the chorismate, which leads to the biosynthesis of aromatic amino acids. Catalyzes the reversible NADPH linked reduction of 3-dehydroshikimate (DHSA) to yield shikimate (SA). The protein is Shikimate dehydrogenase (NADP(+)) of Paracoccus denitrificans (strain Pd 1222).